Here is a 932-residue protein sequence, read N- to C-terminus: Progesterone receptor (932 aa).

Positions 1–164 (MTELKAKGPR…PATQGVLSPL (164 aa)) are AF3; mediates transcriptional activation. The interval 1 to 254 (MTELKAKGPR…GGAAAGGAAA (254 aa)) is disordered. Residues 1 to 565 (MTELKAKGPR…YSFESLPQKI (565 aa)) are modulating, Pro-Rich. Phosphoserine is present on Ser20. The LXXL motif 1 signature appears at 55–59 (LDGLL). Position 81 is a phosphoserine (Ser81). Residues 88–103 (SRAEATRGAGGSSSSP) are compositionally biased toward low complexity. Positions 115 to 119 (LDTLL) match the LXXL motif 2 motif. Phosphoserine occurs at positions 130 and 162. The mediates transcriptional transrepression stretch occupies residues 165-304 (MSRSGGKAGD…LATTVMDFIH (140 aa)). A Nuclear localization signal motif is present at residues 183 to 187 (KVLPQ). 2 positions are modified to phosphoserine: Ser190 and Ser213. Residues 220-231 (EVEEEDGSESED) are compositionally biased toward acidic residues. Low complexity predominate over residues 232–254 (SAGPLLKGKPRALGGAAAGGAAA). Position 293 is a phosphoserine; by MAPK1 (Ser293). The span at 334–349 (AASAFAPPRSSPSASS) shows a compositional bias: low complexity. Residues 334-356 (AASAFAPPRSSPSASSTPVAVGD) form a disordered region. Ser344 is modified (phosphoserine; by MAPK). Residue Lys387 forms a Glycyl lysine isopeptide (Lys-Gly) (interchain with G-Cter in SUMO); alternate linkage. Lys387 participates in a covalent cross-link: Glycyl lysine isopeptide (Lys-Gly) (interchain with G-Cter in ubiquitin); alternate. Disordered stretches follow at residues 414–451 (PDFP…SSAS) and 468–499 (PPQQ…STAA). Positions 417–432 (PLGPPPPLPPRAPPSR) are enriched in pro residues. The segment covering 433–451 (PGEAAVTAAPASASVSSAS) has biased composition (low complexity). An AF1; mediates transcriptional activation region spans residues 455–545 (STLECILYKA…VYPPYLNYLR (91 aa)). The segment covering 470–480 (QQGPFAPPPSK) has biased composition (pro residues). Lys530 is covalently cross-linked (Glycyl lysine isopeptide (Lys-Gly) (interchain with G-Cter in SUMO)). 2 NR C4-type zinc fingers span residues 566-586 (CLIC…CGSC) and 602-626 (CAGR…LRKC). The nuclear receptor DNA-binding region spans 566-638 (CLICGDEASG…AGMVLGGRKF (73 aa)). Position 675 is a phosphoserine (Ser675). Positions 678–912 (QDIQLIPPLI…EFPEMMSEVI (235 aa)) constitute an NR LBD domain. Positions 686 to 932 (LINLLMSIEP…MVKPLLFHKK (247 aa)) are AF2; mediates transcriptional activation. Arg765 is a progesterone binding site.

The protein belongs to the nuclear hormone receptor family. As to quaternary structure, interacts with SMARD1 and UNC45A. Interacts with CUEDC2; the interaction promotes ubiquitination, decreases sumoylation, and represses transcriptional activity. Interacts with PIAS3; the interaction promotes sumoylation of PR in a hormone-dependent manner, inhibits DNA-binding, and alters nuclear export. Interacts with SP1; the interaction requires ligand-induced phosphorylation on Ser-344 by ERK1/2-MAPK. Interacts with PRMT2. Interacts with NCOA2 and NCOA1. Interacts with KLF9. Interacts with GTF2B. Phosphorylated on multiple serine sites. Several of these sites are hormone-dependent. Phosphorylation on Ser-293 is highly hormone-dependent and modulates ubiquitination and sumoylation on Lys-387. Phosphorylation on Ser-102 and Ser-344 also requires induction by hormone. Basal phosphorylation on Ser-81, Ser-162 and Ser-190 is increased in response to progesterone and can be phosphorylated in vitro by the CDK2-A1 complex. Phosphorylation at Ser-162 and Ser-293, but not at Ser-190, is impaired during the G(2)/M phase of the cell cycle. Phosphorylation on Ser-344 by ERK1/2 MAPK is required for interaction with SP1. In terms of processing, sumoylation is hormone-dependent and represses transcriptional activity. Sumoylation on all three sites is enhanced by PIAS3. Desumoylated by SENP1. Sumoylation on Lys-387, the main site of sumoylation, is repressed by ubiquitination on the same site, and modulated by phosphorylation at Ser-293. Post-translationally, ubiquitination is hormone-dependent and represses sumoylation on the same site. Promoted by MAPK-mediated phosphorylation on Ser-293. Ubiquitinated by UBR5, leading to its degradation: UBR5 specifically recognizes and binds ligand-bound PGR when it is not associated with coactivators (NCOAs). In presence of NCOAs, the UBR5-degron is not accessible, preventing its ubiquitination and degradation. Palmitoylated by ZDHHC7 and ZDHHC21. Palmitoylation is required for plasma membrane targeting and for rapid intracellular signaling via ERK and AKT kinases and cAMP generation.

The protein localises to the nucleus. The protein resides in the cytoplasm. The steroid hormones and their receptors are involved in the regulation of eukaryotic gene expression and affect cellular proliferation and differentiation in target tissues. Transcriptional activator of several progesteron-dependent promoters in a variety of cell types. Involved in activation of SRC-dependent MAPK signaling on hormone stimulation. This is Progesterone receptor (PGR) from Hylobates lar (Lar gibbon).